The sequence spans 280 residues: Tumor necrosis factor ligand superfamily member 6 (280 aa).

The Cytoplasmic segment spans residues Met-1–Leu-80. The segment at Ser-20–Lys-71 is disordered. A compositionally biased stretch (pro residues) spans Arg-43–Pro-69. Residues Cys-81–Phe-101 traverse the membrane as a helical; Signal-anchor for type II membrane protein segment. Residues Gln-102 to Leu-280 are Extracellular-facing. The THD domain occupies Lys-144–Leu-280. The N-linked (GlcNAc...) asparagine glycan is linked to Asn-183. Cysteines 201 and 232 form a disulfide. Residues Asn-249 and Asn-259 are each glycosylated (N-linked (GlcNAc...) asparagine).

This sequence belongs to the tumor necrosis factor family. In terms of assembly, homotrimer. Interacts with ARHGAP9, BAIAP2L1, BTK, CACNB3, CACNB4, CRK, DLG2, DNMBP, DOCK4, EPS8L3, FGR, FYB1, FYN, HCK, ITK, ITSN2, KALRN, LYN, MACC1, MIA, MPP4, MYO15A, NCF1, NCK1, NCK2, NCKIPSD, OSTF1, PIK3R1, PSTPIP1, RIMBP3C, SAMSN1, SH3GL3, SH3PXD2B, SH3PXD2A, SH3RF2, SKAP2, SNX33, SNX9, SORBS3, SPTA1, SRC, SRGAP1, SRGAP2, SRGAP3, TEC, TJP3 and YES1. The soluble form derives from the membrane form by proteolytic processing. The membrane-bound form undergoes two successive intramembrane proteolytic cleavages. The first one is processed by ADAM10 producing an N-terminal fragment, which lacks the receptor-binding extracellular domain. This ADAM10-processed FasL (FasL APL) remnant form is still membrane anchored and further processed by SPPL2A that liberates the FasL intracellular domain (FasL ICD). FasL shedding by ADAM10 is a prerequisite for subsequent intramembrane cleavage by SPPL2A in T-cells. Post-translationally, phosphorylated by FGR on tyrosine residues; this is required for ubiquitination and subsequent internalization. In terms of processing, N-glycosylated. Glycosylation enhances apoptotic activity. Monoubiquitinated.

The protein resides in the cell membrane. It localises to the cytoplasmic vesicle lumen. The protein localises to the lysosome lumen. It is found in the secreted. Its subcellular location is the nucleus. Cytokine that binds to TNFRSF6/FAS, a receptor that transduces the apoptotic signal into cells. Involved in cytotoxic T-cell-mediated apoptosis, natural killer cell-mediated apoptosis and in T-cell development. Initiates fratricidal/suicidal activation-induced cell death (AICD) in antigen-activated T-cells contributing to the termination of immune responses. TNFRSF6/FAS-mediated apoptosis has also a role in the induction of peripheral tolerance. Binds to TNFRSF6B/DcR3, a decoy receptor that blocks apoptosis. In terms of biological role, induces FAS-mediated activation of NF-kappa-B, initiating non-apoptotic signaling pathways. Can induce apoptosis but does not appear to be essential for this process. Functionally, cytoplasmic form induces gene transcription inhibition. This chain is Tumor necrosis factor ligand superfamily member 6 (FASLG), found in Felis catus (Cat).